A 650-amino-acid chain; its full sequence is Aminopeptidase B (650 aa).

298–302 (GGMEN) lines the substrate pocket. A Zn(2+)-binding site is contributed by H325. E326 (proton acceptor) is an active-site residue. Zn(2+) contacts are provided by H329 and E348. K446 bears the N6-acetyllysine mark.

Belongs to the peptidase M1 family. As to quaternary structure, monomer. The cofactor is Zn(2+).

It localises to the secreted. The catalysed reaction is Release of N-terminal Arg and Lys from oligopeptides when P1' is not Pro. Also acts on arylamides of Arg and Lys.. In terms of biological role, exopeptidase which selectively removes arginine and/or lysine residues from the N-terminus of several peptide substrates including Arg(0)-Leu-enkephalin, Arg(0)-Met-enkephalin and Arg(-1)-Lys(0)-somatostatin-14. Can hydrolyze leukotriene A4 (LTA-4) into leukotriene B4 (LTB-4). The polypeptide is Aminopeptidase B (Rnpep) (Mus musculus (Mouse)).